Here is a 108-residue protein sequence, read N- to C-terminus: uncharacterized protein (108 aa).

Residues 15–37 form a helical membrane-spanning segment; the sequence is SYYFYIFWNFFLPMFIVYRGFGL.

Its subcellular location is the membrane. This is an uncharacterized protein from Archaeoglobus fulgidus (strain ATCC 49558 / DSM 4304 / JCM 9628 / NBRC 100126 / VC-16).